The following is a 354-amino-acid chain: Heat-inducible transcription repressor HrcA (354 aa).

It belongs to the HrcA family.

In terms of biological role, negative regulator of class I heat shock genes (grpE-dnaK-dnaJ and groELS operons). Prevents heat-shock induction of these operons. This Novosphingobium aromaticivorans (strain ATCC 700278 / DSM 12444 / CCUG 56034 / CIP 105152 / NBRC 16084 / F199) protein is Heat-inducible transcription repressor HrcA.